We begin with the raw amino-acid sequence, 193 residues long: dCTP deaminase (193 aa).

Residues Arg-110–Arg-115, Asp-128, Val-136–Glu-138, Tyr-171, Lys-178, and Gln-182 each bind dCTP. Glu-138 acts as the Proton donor/acceptor in catalysis. The interval Arg-169–Asp-193 is disordered.

It belongs to the dCTP deaminase family. In terms of assembly, homotrimer.

It carries out the reaction dCTP + H2O + H(+) = dUTP + NH4(+). The protein operates within pyrimidine metabolism; dUMP biosynthesis; dUMP from dCTP (dUTP route): step 1/2. In terms of biological role, catalyzes the deamination of dCTP to dUTP. In Pectobacterium atrosepticum (strain SCRI 1043 / ATCC BAA-672) (Erwinia carotovora subsp. atroseptica), this protein is dCTP deaminase.